Here is a 528-residue protein sequence, read N- to C-terminus: Light-independent protochlorophyllide reductase subunit B (528 aa).

Aspartate 36 lines the [4Fe-4S] cluster pocket. Aspartate 274 (proton donor) is an active-site residue. Residue 409 to 410 (GL) coordinates substrate. The segment at 429 to 471 (GPSHHGGHAPKPMHDAPAASAAAGAEASMAEETAAPSQDAPAA) is disordered. A compositionally biased stretch (low complexity) spans 444–465 (APAASAAAGAEASMAEETAAPS).

Belongs to the ChlB/BchB/BchZ family. As to quaternary structure, protochlorophyllide reductase is composed of three subunits; BchL, BchN and BchB. Forms a heterotetramer of two BchB and two BchN subunits. The cofactor is [4Fe-4S] cluster.

It carries out the reaction chlorophyllide a + oxidized 2[4Fe-4S]-[ferredoxin] + 2 ADP + 2 phosphate = protochlorophyllide a + reduced 2[4Fe-4S]-[ferredoxin] + 2 ATP + 2 H2O. The protein operates within porphyrin-containing compound metabolism; bacteriochlorophyll biosynthesis (light-independent). Its function is as follows. Component of the dark-operative protochlorophyllide reductase (DPOR) that uses Mg-ATP and reduced ferredoxin to reduce ring D of protochlorophyllide (Pchlide) to form chlorophyllide a (Chlide). This reaction is light-independent. The NB-protein (BchN-BchB) is the catalytic component of the complex. The protein is Light-independent protochlorophyllide reductase subunit B of Dinoroseobacter shibae (strain DSM 16493 / NCIMB 14021 / DFL 12).